Reading from the N-terminus, the 131-residue chain is Maturin (131 aa).

A compositionally biased stretch (acidic residues) spans phenylalanine 107 to glutamate 120. The segment at phenylalanine 107–glutamine 131 is disordered.

It belongs to the MTURN family.

Its subcellular location is the cytoplasm. Functionally, involved in early neuronal development; required for cell cycle exit and differentiation of primary neurons. Cooperates synergistically with pak3 to promote primary neural differentiation within the neural plate. May play a role in promoting megakaryocyte differentiation. The polypeptide is Maturin (mturn) (Xenopus laevis (African clawed frog)).